Consider the following 257-residue polypeptide: Serine/arginine-rich splicing factor 1 (257 aa).

S2 bears the N-acetylserine mark. The 76-residue stretch at 16 to 91 (CRIYVGNLPP…YRLRVEFPRS (76 aa)) folds into the RRM 1 domain. Residues 88-116 (FPRSGRGTGRGGGGGGGGGAPRGRYGPPS) form a disordered region. The span at 93–108 (RGTGRGGGGGGGGGAP) shows a compositional bias: gly residues. An RRM 2 domain is found at 121-195 (YRVIVSGLPP…ETAYIRVKVD (75 aa)).

It localises to the cytoplasm. The protein localises to the nucleus speckle. Its function is as follows. May play a role in preventing exon skipping, ensuring the accuracy of splicing and regulating alternative splicing. In Gallus gallus (Chicken), this protein is Serine/arginine-rich splicing factor 1 (SRSF1).